Here is a 327-residue protein sequence, read N- to C-terminus: Peroxidase 15 (327 aa).

An N-terminal signal peptide occupies residues 1–23 (MASFSPLLAMALAIFIFSSHSNA). Pyrrolidone carboxylic acid is present on Q24. 4 cysteine pairs are disulfide-bonded: C34/C115, C67/C72, C121/C323, and C200/C232. N36 carries N-linked (GlcNAc...) asparagine glycosylation. Catalysis depends on H65, which acts as the Proton acceptor. Ca(2+)-binding residues include D66, V69, G71, D73, and S75. N-linked (GlcNAc...) asparagine glycans are attached at residues N81, N96, and N159. A substrate-binding site is contributed by P163. N-linked (GlcNAc...) asparagine glycosylation is found at N168 and N171. H193 lines the heme b pocket. T194 contacts Ca(2+). 2 N-linked (GlcNAc...) asparagine glycosylation sites follow: N209 and N221. Ca(2+)-binding residues include D245, T248, and D253. 2 N-linked (GlcNAc...) asparagine glycosylation sites follow: N287 and N291.

It belongs to the peroxidase family. Classical plant (class III) peroxidase subfamily. The cofactor is Ca(2+). Heme b serves as cofactor.

The protein localises to the secreted. It carries out the reaction 2 a phenolic donor + H2O2 = 2 a phenolic radical donor + 2 H2O. In terms of biological role, removal of H(2)O(2), oxidation of toxic reductants, biosynthesis and degradation of lignin, suberization, auxin catabolism, response to environmental stresses such as wounding, pathogen attack and oxidative stress. These functions might be dependent on each isozyme/isoform in each plant tissue. This Ipomoea batatas (Sweet potato) protein is Peroxidase 15.